Consider the following 772-residue polypeptide: Protein transport protein SEC23 F (772 aa).

Residues cysteine 65, cysteine 68, cysteine 87, and cysteine 90 each contribute to the Zn(2+) site. The zinc finger-like stretch occupies residues 65–90 (CKTCKALLNAFARVDFAAMNWVCPFC).

This sequence belongs to the SEC23/SEC24 family. SEC23 subfamily. As to quaternary structure, component of the coat protein complex II (COPII), composed of at least five proteins: the Sec23/24 complex, the Sec13/31 complex and Sar1. Interacts with SEC24A.

The protein resides in the cytoplasmic vesicle. It localises to the COPII-coated vesicle membrane. Its subcellular location is the endoplasmic reticulum membrane. It is found in the membrane. In terms of biological role, component of the coat protein complex II (COPII) which promotes the formation of transport vesicles from the endoplasmic reticulum (ER). The coat has two main functions, the physical deformation of the endoplasmic reticulum membrane into vesicles and the selection of cargo molecules. The protein is Protein transport protein SEC23 F of Arabidopsis thaliana (Mouse-ear cress).